The sequence spans 296 residues: CDP-diacylglycerol--glycerol-3-phosphate 3-phosphatidyltransferase 1, chloroplastic/mitochondrial (296 aa).

A chloroplast and mitochondrion-targeting transit peptide spans 1-39; the sequence is MLRSGLASLIVDVNLRRTLRPSPTFSFPAHLSRCIITSR. A compositionally biased stretch (low complexity) spans 62–82; the sequence is FSSSSSSEQSRPTSSSRNSFS. The segment at 62 to 103 is disordered; the sequence is FSSSSSSEQSRPTSSSRNSFSGHGQLDSDDNSSPPPSQSSSK. Helical transmembrane passes span 104 to 124, 126 to 146, 164 to 184, 189 to 209, and 261 to 281; these read VLTL…LLVA, FYVD…AAAI, FGAF…LILL, IQVA…IAII, and VGWL…LSVW.

It belongs to the CDP-alcohol phosphatidyltransferase class-I family. The cofactor is Mn(2+).

It is found in the plastid. It localises to the chloroplast membrane. The protein localises to the mitochondrion membrane. The catalysed reaction is a CDP-1,2-diacyl-sn-glycerol + sn-glycerol 3-phosphate = a 1,2-diacyl-sn-glycero-3-phospho-(1'-sn-glycero-3'-phosphate) + CMP + H(+). It participates in phospholipid metabolism; phosphatidylglycerol biosynthesis; phosphatidylglycerol from CDP-diacylglycerol: step 1/2. Catalyzes the committed step to the synthesis of the acidic phospholipids, including phosphatidylglycerol (PG). Transfers specifically a phosphatidyl group from CDP-diacylglycerol to glycerol-3-phosphate to form phosphatidylglycerophosphate. Cannot catalyze the phosphatidyl group transfer to inositol, serine, choline or phosphatidylglycerol. Possesses high activity with CDP-dipalmitoylglycerol and low activity with CDP-dioleoylglycerol. Essential for chloroplast differentiation and PG accumulation in thylakoids, an essential process for the assembly of antenna-reaction center complexes to optimize energy transfer from antenna pigments, and for subsequent photochemical efficiency of photosystem II (PSII). During cold acclimation (at 5 degrees Celsius), necessary for the photosystem I (PSI) photochemistry, including both reaction center and light-harvesting integrity. But dispensable in mitochondrion, being redundant with PGPS2 for the production of PG and its derivative cardiolipin (CL) in mitochondrial membranes. Together with PGPS2, required for the proper embryo development by providing PG accurate levels. This is CDP-diacylglycerol--glycerol-3-phosphate 3-phosphatidyltransferase 1, chloroplastic/mitochondrial from Arabidopsis thaliana (Mouse-ear cress).